A 256-amino-acid polypeptide reads, in one-letter code: Ubiquinone/menaquinone biosynthesis C-methyltransferase UbiE (256 aa).

Residues threonine 79, aspartate 100, and 128-129 (DA) contribute to the S-adenosyl-L-methionine site.

It belongs to the class I-like SAM-binding methyltransferase superfamily. MenG/UbiE family.

It catalyses the reaction a 2-demethylmenaquinol + S-adenosyl-L-methionine = a menaquinol + S-adenosyl-L-homocysteine + H(+). The catalysed reaction is a 2-methoxy-6-(all-trans-polyprenyl)benzene-1,4-diol + S-adenosyl-L-methionine = a 5-methoxy-2-methyl-3-(all-trans-polyprenyl)benzene-1,4-diol + S-adenosyl-L-homocysteine + H(+). The protein operates within quinol/quinone metabolism; menaquinone biosynthesis; menaquinol from 1,4-dihydroxy-2-naphthoate: step 2/2. Its pathway is cofactor biosynthesis; ubiquinone biosynthesis. Its function is as follows. Methyltransferase required for the conversion of demethylmenaquinol (DMKH2) to menaquinol (MKH2) and the conversion of 2-polyprenyl-6-methoxy-1,4-benzoquinol (DDMQH2) to 2-polyprenyl-3-methyl-6-methoxy-1,4-benzoquinol (DMQH2). The polypeptide is Ubiquinone/menaquinone biosynthesis C-methyltransferase UbiE (Ectopseudomonas mendocina (strain ymp) (Pseudomonas mendocina)).